Reading from the N-terminus, the 541-residue chain is Atlastin (541 aa).

Topologically, residues 1–424 (MGGSAVQVIN…NIFKAARTPA (424 aa)) are cytoplasmic. The 250-residue stretch at 35-284 (DRFVCVVSVA…LVPMLLAPDN (250 aa)) folds into the GB1/RHD3-type G domain. The GDP site is built by arginine 48, lysine 49, glycine 50, lysine 51, and serine 52. GTP contacts are provided by arginine 48, lysine 49, glycine 50, lysine 51, serine 52, and phenylalanine 53. Serine 52 is a Mg(2+) binding site. Aspartate 121 contacts Mg(2+). Residues arginine 192, aspartate 193, and valine 251 each contribute to the GDP site. GTP-binding residues include arginine 192, aspartate 193, and valine 251. The interval 322–413 (MLVATAEANH…FTNYQAHNES (92 aa)) is 3HB (three-helix bundle) domain. The segment at 414-422 (KNIFKAART) is linker. A helical membrane pass occupies residues 425-445 (VYFACAVIMYILSGIFGLVGL). The Lumenal portion of the chain corresponds to 446-448 (YTF). A helical membrane pass occupies residues 449–469 (ANFCNLVMGVALLTLALWAYI). At 470-541 (RYSGELSDFG…NASNGKVKRS (72 aa)) the chain is on the cytoplasmic side. Threonine 514 is modified (phosphothreonine).

It belongs to the TRAFAC class dynamin-like GTPase superfamily. GB1/RHD3 GTPase family. GB1 subfamily. In terms of assembly, monomeric and homodimeric. The homodimer, transiently formed by two molecules on opposing membranes, is the active form mediating ER membrane fusion. Interacts with spas; interaction may regulate microtubule dynamics. Ubiquitously expressed.

It localises to the endoplasmic reticulum membrane. The protein localises to the golgi apparatus membrane. It carries out the reaction GTP + H2O = GDP + phosphate + H(+). Its function is as follows. Membrane-anchored GTPase that mediates the GTP-dependent fusion of endoplasmic reticulum (ER) membranes, maintaining the continuous ER network. It facilitates the formation of three-way junctions where ER tubules intersect. Two atlastin-1 on neighboring ER tubules bind GTP and form loose homodimers through the GB1/RHD3-type G domains and 3HB regions. Upon GTP hydrolysis, the 3HB regions tighten, pulling the membranes together to drive their fusion. After fusion, the homodimer disassembles upon release of inorganic phosphate (Pi). Subsequently, GDP dissociates, resetting the monomers to a conformation ready for a new fusion cycle. May also regulate more or less directly Golgi biogenesis. May also regulate microtubule polymerization and Golgi biogenesis. Required for dopaminergic neurons survival and the growth of muscles and synapses at neuromuscular junctions. The sequence is that of Atlastin (atl) from Drosophila melanogaster (Fruit fly).